A 512-amino-acid chain; its full sequence is Cytochrome P450 monooxygenase poxM (512 aa).

Residues leucine 15–isoleucine 35 traverse the membrane as a helical segment. Position 449 (cysteine 449) interacts with heme.

The protein belongs to the cytochrome P450 family. It depends on heme as a cofactor.

The protein resides in the membrane. It functions in the pathway secondary metabolite biosynthesis. Its function is as follows. Cytochrome P450 monooxygenase; part of the gene cluster that mediates the biosynthesis of oxaleimides, cytotoxic compounds containing an unusual disubstituted succinimide moiety. The first step of the pathway is provided by the HR-PKS poxF that serves in a new mode of collaborative biosynthesis with the PKS-NRPS poxE, by providing the olefin containing amino acid substrate via the synthesis of an ACP-bound dec-4-enoate. The cytochrome P450 monooxygenase poxM-catalyzed oxidation at the alpha-position creates the enzyme-bound 2-hydroxydec-4-enoyl-ACP thioester, which may be prone to spontaneous hydrolysis to yield 2-hydroxydec-4-enoic acid due to increased electrophilicity of the carbonyl. 2-hydroxydec-4-enoic acid can then be further oxidized by poxM to yield the alpha-ketoacid 2-oxodec-4-enoicacid, which is reductively aminated by the aminotransferase poxL to yield (S,E)-2-aminodec-4-enoic acid. The Hybrid PKS-NRPS synthetase poxE then performs condensation between the octaketide product of its PKS modules and the amino group of (S,E)-2-aminodec-4-enoic acid which is activated and incorporated by the adenylation domain. The resulting aminoacyl product can be cyclized by the Diels-Alderase PoxQ and reductively released by the reductive (R) domain of poxE to yield an aldehyde intermediate. The released aldehyde is then substrate for a Knoevenagel condensation by the hydrolyase poxO followed by an oxidation at the 5-position of the pyrrolidone ring. The presence of the olefin from the amino acid building block allows for migration of the substituted allyl group to occur. This allylic transposition reaction takes place in a conjugate addition, semipinacol-like fashion to yield a succinimide intermediate. Iterative two-electron oxidations of the C7 methyl of the succinimide intermediate to the carboxylic acid can be catalyzed by one of two remaining cytochrome P450 monooxygenasess poxC or poxD to yield oxaleimide A. Subsequent oxidation yields the maleimide scaffold oxaleimide I. Both oxaleimide A and oxaleimide I can undergo oxidative modifications in the decalin ring to yield the series of products oxaleimides B to H. The sequence is that of Cytochrome P450 monooxygenase poxM from Penicillium oxalicum (strain 114-2 / CGMCC 5302) (Penicillium decumbens).